Reading from the N-terminus, the 332-residue chain is Protein FAM131B (332 aa).

A disordered region spans residues 1–22; sequence MDSTSSLHGSSLHRPSTEQTRT. Residues Ser-47, Ser-114, and Ser-117 each carry the phosphoserine modification. A disordered region spans residues 221–332; the sequence is LGPAFDDSQP…FDEEEGDANN (112 aa). 2 stretches are compositionally biased toward basic and acidic residues: residues 272–281 and 288–302; these read PVEEEKRPLA and AGCRDLESLSPREDP. Phosphoserine occurs at positions 295, 297, and 313. Residue Thr-316 is modified to Phosphothreonine. Ser-317, Ser-318, and Ser-322 each carry phosphoserine. A compositionally biased stretch (acidic residues) spans 323–332; that stretch reads FDEEEGDANN.

This sequence belongs to the FAM131 family.

The protein is Protein FAM131B (Fam131b) of Rattus norvegicus (Rat).